A 225-amino-acid chain; its full sequence is NAD(P)H-quinone oxidoreductase subunit K, chloroplastic (225 aa).

[4Fe-4S] cluster is bound by residues cysteine 43, cysteine 44, cysteine 108, and cysteine 139.

It belongs to the complex I 20 kDa subunit family. As to quaternary structure, NDH is composed of at least 16 different subunits, 5 of which are encoded in the nucleus. The cofactor is [4Fe-4S] cluster.

It is found in the plastid. The protein localises to the chloroplast thylakoid membrane. It catalyses the reaction a plastoquinone + NADH + (n+1) H(+)(in) = a plastoquinol + NAD(+) + n H(+)(out). The enzyme catalyses a plastoquinone + NADPH + (n+1) H(+)(in) = a plastoquinol + NADP(+) + n H(+)(out). Its function is as follows. NDH shuttles electrons from NAD(P)H:plastoquinone, via FMN and iron-sulfur (Fe-S) centers, to quinones in the photosynthetic chain and possibly in a chloroplast respiratory chain. The immediate electron acceptor for the enzyme in this species is believed to be plastoquinone. Couples the redox reaction to proton translocation, and thus conserves the redox energy in a proton gradient. The sequence is that of NAD(P)H-quinone oxidoreductase subunit K, chloroplastic from Arabis hirsuta (Hairy rock-cress).